The sequence spans 489 residues: Pluviatolide synthase (489 aa).

Residues 6-26 (SVLAMSSTLILALAMALIFLF) form a helical membrane-spanning segment. Cys-432 is a binding site for heme.

The protein belongs to the cytochrome P450 family. Heme serves as cofactor. Expressed in leaves, rhizomes and stems.

It is found in the membrane. The enzyme catalyses (-)-matairesinol + reduced [NADPH--hemoprotein reductase] + O2 = (-)-pluviatolide + oxidized [NADPH--hemoprotein reductase] + 2 H2O + H(+). The protein operates within aromatic compound metabolism; phenylpropanoid biosynthesis. Its function is as follows. Cytochrome P450 involved in the biosynthesis of etoposide, a chemotherapeutic compound of the topoisomerase inhibitor family. Catalyzes the conversion of matairesinol to pluviatolide. This Sinopodophyllum hexandrum (Himalayan may apple) protein is Pluviatolide synthase.